A 103-amino-acid chain; its full sequence is Large ribosomal subunit protein uL24 (103 aa).

The protein belongs to the universal ribosomal protein uL24 family. Part of the 50S ribosomal subunit.

Functionally, one of two assembly initiator proteins, it binds directly to the 5'-end of the 23S rRNA, where it nucleates assembly of the 50S subunit. One of the proteins that surrounds the polypeptide exit tunnel on the outside of the subunit. The sequence is that of Large ribosomal subunit protein uL24 from Bacillus cytotoxicus (strain DSM 22905 / CIP 110041 / 391-98 / NVH 391-98).